The primary structure comprises 157 residues: Small ribosomal subunit protein uS7 (157 aa).

The protein belongs to the universal ribosomal protein uS7 family. In terms of assembly, part of the 30S ribosomal subunit. Contacts proteins S9 and S11.

One of the primary rRNA binding proteins, it binds directly to 16S rRNA where it nucleates assembly of the head domain of the 30S subunit. Is located at the subunit interface close to the decoding center, probably blocks exit of the E-site tRNA. This chain is Small ribosomal subunit protein uS7, found in Rhodopirellula baltica (strain DSM 10527 / NCIMB 13988 / SH1).